A 73-amino-acid chain; its full sequence is Large ribosomal subunit protein bL31 (73 aa).

4 residues coordinate Zn(2+): Cys-16, Cys-18, Cys-36, and Cys-39.

The protein belongs to the bacterial ribosomal protein bL31 family. Type A subfamily. Part of the 50S ribosomal subunit. Requires Zn(2+) as cofactor.

Binds the 23S rRNA. This Myxococcus xanthus (strain DK1622) protein is Large ribosomal subunit protein bL31.